The following is a 482-amino-acid chain: Replication factor C large subunit (482 aa).

ATP is bound at residue 46–53 (GPPGSGKT). A disordered region spans residues 420–482 (EKETPKKKKK…KKQATLDSFF (63 aa)). Residues 442–476 (KISEPPKEPLKEVIEETVEKTDKKEKEKKDPKKQA) are compositionally biased toward basic and acidic residues.

This sequence belongs to the activator 1 small subunits family. RfcL subfamily. In terms of assembly, heteromultimer composed of small subunits (RfcS) and large subunits (RfcL).

Functionally, part of the RFC clamp loader complex which loads the PCNA sliding clamp onto DNA. The chain is Replication factor C large subunit from Methanococcus maripaludis (strain C7 / ATCC BAA-1331).